Consider the following 1149-residue polypeptide: Nitric oxide synthase, inducible (1149 aa).

The segment at 22 to 83 (KDINNNVGKA…HKPSPTCSQH (62 aa)) is disordered. The DINNN-motif; mediates interaction with SPSB1, SPSB2 and SPSB4 signature appears at 23–27 (DINNN). The segment covering 50–61 (KHQNGSSQSLTG) has biased composition (polar residues). Positions 109 and 114 each coordinate Zn(2+). Ser-117 is a binding site for (6R)-L-erythro-5,6,7,8-tetrahydrobiopterin. Cys-199 provides a ligand contact to heme b. Gln-262, Trp-371, Tyr-372, and Glu-376 together coordinate L-arginine. (6R)-L-erythro-5,6,7,8-tetrahydrobiopterin contacts are provided by Arg-380, Ile-461, Trp-462, and Phe-475. Tyr-490 contacts heme b. A calmodulin-binding region spans residues 514-534 (FRVLAKATLFASLLMRKMMAS). The 139-residue stretch at 538-676 (ATILFATETG…AFCTWAVQTF (139 aa)) folds into the Flavodoxin-like domain. FMN contacts are provided by Thr-544, Glu-545, Thr-546, Lys-548, and Ser-549. Position 574 is a phosphotyrosine (Tyr-574). FMN contacts are provided by Ser-590, Thr-591, Ser-627, Arg-632, Cys-634, Glu-660, and Gln-664. The region spanning 729 to 969 (TDVFTMRLKS…VRSVNSFQLP (241 aa)) is the FAD-binding FR-type domain. Arg-749 serves as a coordination point for NADP(+). His-771, Arg-905, Tyr-907, Ser-908, Thr-923, and Ala-925 together coordinate FAD. NADP(+) is bound at residue Thr-928. FAD is bound by residues Tyr-929, Val-942, Cys-943, and Ser-944. NADP(+)-binding residues include Thr-983, Arg-1016, Ser-1045, Arg-1046, Lys-1052, Tyr-1054, Gln-1056, and Asp-1089.

The protein belongs to the NOS family. As to quaternary structure, homodimer. Interacts with NHERF1. Interacts with GAPDH; induced by oxidatively-modified low-densitity lipoprotein (LDL(ox)). Interacts with S100A8 and S100A9 to form the iNOS-S100A8/9 transnitrosylase complex. Interacts with SPSB1, SPSB2 and SPSB4. Interacts with ELOC and CUL5 in the presence of SPSB1 or SPSB2 or SPSB4. Forms a complex with ASL, ASS1 and HSP90AA1; the complex regulates cell-autonomous L-arginine synthesis and citrulline recycling while channeling extracellular L-arginine to nitric oxide synthesis pathway. The cofactor is heme b. FAD serves as cofactor. Requires FMN as cofactor. (6R)-L-erythro-5,6,7,8-tetrahydrobiopterin is required as a cofactor. Post-translationally, polyubiquitinated; mediated by SPSB1, SPSB2 and SPSB4, leading to proteasomal degradation. In terms of tissue distribution, expressed in the lung and colon. Not detected in the heart, aorta, liver, kidney, and spleen.

It localises to the cytoplasm. It is found in the cytosol. It catalyses the reaction 2 L-arginine + 3 NADPH + 4 O2 + H(+) = 2 L-citrulline + 2 nitric oxide + 3 NADP(+) + 4 H2O. With respect to regulation, regulated by calcium/calmodulin. Its function is as follows. Produces nitric oxide (NO) which is a messenger molecule with diverse functions throughout the body. In macrophages, NO mediates tumoricidal and bactericidal actions. Also has nitrosylase activity and mediates cysteine S-nitrosylation of cytoplasmic target proteins such PTGS2/COX2. As component of the iNOS-S100A8/9 transnitrosylase complex involved in the selective inflammatory stimulus-dependent S-nitrosylation of GAPDH implicated in regulation of the GAIT complex activity and probably multiple targets including ANXA5, EZR, MSN and VIM. Involved in inflammation, enhances the synthesis of pro-inflammatory mediators such as IL6 and IL8. This chain is Nitric oxide synthase, inducible (NOS2), found in Cavia porcellus (Guinea pig).